Consider the following 445-residue polypeptide: Argininosuccinate synthase (445 aa).

ATP contacts are provided by residues Ala-17–Ser-25 and Ala-43. L-citrulline is bound at residue Tyr-99. Gly-129 and Thr-131 together coordinate ATP. L-aspartate is bound by residues Thr-131, Asn-135, and Asp-136. Asn-135 lines the L-citrulline pocket. Position 136 (Asp-136) interacts with ATP. L-citrulline is bound by residues Arg-139 and Ser-192. Asp-194 is a binding site for ATP. L-citrulline contacts are provided by Thr-201, Glu-203, and Glu-280.

It belongs to the argininosuccinate synthase family. Type 2 subfamily. In terms of assembly, homotetramer.

Its subcellular location is the cytoplasm. The enzyme catalyses L-citrulline + L-aspartate + ATP = 2-(N(omega)-L-arginino)succinate + AMP + diphosphate + H(+). Its pathway is amino-acid biosynthesis; L-arginine biosynthesis; L-arginine from L-ornithine and carbamoyl phosphate: step 2/3. The polypeptide is Argininosuccinate synthase (Burkholderia ambifaria (strain MC40-6)).